Here is a 401-residue protein sequence, read N- to C-terminus: Putative hetero-Diels-Alderase asR5 (401 aa).

The N-terminal stretch at Met1 to Ala21 is a signal peptide. Residues Asn71, Asn77, Asn240, and Asn334 are each glycosylated (N-linked (GlcNAc...) asparagine).

It belongs to the eupF Diels-Alderase family.

The protein operates within secondary metabolite biosynthesis; terpenoid biosynthesis. In terms of biological role, putative hetero-Diels-Alderase; part of the gene cluster that mediates the biosynthesis of xenovulene A, an unusual meroterpenoid that has potent inhibitory effects on the human gamma-aminobutyrate A (GABAA) benzodiazepine receptor. The first step of xenovulene A biosynthesis is the biosynthesis of 3-methylorcinaldehyde performed by the non-reducing polyketide synthase aspks1. The salicylate hydroxylase asL1 then catalyzes the oxidative dearomatization of 3-methylorcinaldehyde to yield a dearomatized hydroxycyclohexadione. The 2-oxoglutarate-dependent dioxygenase asL3 further catalyzes the oxidative ring expansion to provide the first tropolone metabolite. The cytochrome P450 monooxygenase asR2 allows the synthesis of tropolone hemiacetal. In parallel, a previously unrecognised class of terpene cyclase, asR6, produces alpha-humulene from farnesylpyrophosphate (FPP). The putative Diels-Alderase asR5 probably catalyzes the formation of the tropolone-humulene skeleton by linking humulene and the polyketide moiety. Oxidative-ring contractions catalyzed by asL4 and asL6 then processively remove carbon atoms from the polyketide to yield xenovulene A. In Sarocladium schorii (Acremonium strictum (strain IMI 501407)), this protein is Putative hetero-Diels-Alderase asR5.